Reading from the N-terminus, the 303-residue chain is MIRQRTLKNTIRATGVGLHSGEKVYLTLRPAPVNTGIVFVRTDLDPVVQIAANAEYVTDTTLCTALSRDGVKVATVEHLMSAFAGLGIDNVFVELSAAEVPIMDGSAGPFVFLIQSAGIAEQGAPKKFIRIKREIVVEEDGKEARFLPHNGFKVAFAIDFDHPVFAHQKQTASVDFSTTSFVKEVSRARTFGFMRDLEHLRAQNLALGGSLDNAIVVDDYRIVNEGGLRYEDEFVKHKVLDAIGDLYQLGHSLIGEFRGVKSGHGLNNKLCRALMAQQDAWEIVTFEDDTQTAPISYAAPALA.

Zn(2+) is bound by residues His78, His237, and Asp241. His264 (proton donor) is an active-site residue.

The protein belongs to the LpxC family. Zn(2+) serves as cofactor.

The enzyme catalyses a UDP-3-O-[(3R)-3-hydroxyacyl]-N-acetyl-alpha-D-glucosamine + H2O = a UDP-3-O-[(3R)-3-hydroxyacyl]-alpha-D-glucosamine + acetate. It participates in glycolipid biosynthesis; lipid IV(A) biosynthesis; lipid IV(A) from (3R)-3-hydroxytetradecanoyl-[acyl-carrier-protein] and UDP-N-acetyl-alpha-D-glucosamine: step 2/6. Its function is as follows. Catalyzes the hydrolysis of UDP-3-O-myristoyl-N-acetylglucosamine to form UDP-3-O-myristoylglucosamine and acetate, the committed step in lipid A biosynthesis. The polypeptide is UDP-3-O-acyl-N-acetylglucosamine deacetylase (Chromohalobacter salexigens (strain ATCC BAA-138 / DSM 3043 / CIP 106854 / NCIMB 13768 / 1H11)).